We begin with the raw amino-acid sequence, 323 residues long: Aquaporin-4 (323 aa).

Topologically, residues 1 to 36 are cytoplasmic; it reads MSDGAAARRWGKCGPPCSRESIMVAFKGVWTQAFWK. Residues Cys-13 and Cys-17 are each lipidated (S-palmitoyl cysteine). A helical membrane pass occupies residues 37–57; that stretch reads AVTAEFLAMLIFVLLSVGSTI. The Extracellular segment spans residues 58–69; sequence NWGGSENPLPVD. Residues 70-89 form a helical membrane-spanning segment; the sequence is MVLISLCFGLSIATMVQCFG. Residues 90-93 are Cytoplasmic-facing; sequence HISG. Residues 94-101 constitute an intramembrane region (discontinuously helical); sequence GHINPAVT. The NPA 1 motif lies at 97–99; sequence NPA. Residues 102–115 lie on the Cytoplasmic side of the membrane; that stretch reads VAMVCTRKISIAKS. Phosphoserine; by PKG is present on Ser-111. Residues 116 to 136 traverse the membrane as a helical segment; that stretch reads VFYITAQCLGAIIGAGILYLV. At 137–155 the chain is on the extracellular side; sequence TPPSVVGGLGVTTVHGNLT. Residue Asn-153 is glycosylated (N-linked (GlcNAc...) asparagine). The helical transmembrane segment at 156–176 threads the bilayer; it reads AGHGLLVELIITFQLVFTIFA. Topologically, residues 177 to 184 are cytoplasmic; sequence SCDSKRTD. Residue Ser-180 is modified to Phosphoserine; by PKC. The chain crosses the membrane as a helical span at residues 185-205; that stretch reads VTGSVALAIGFSVAIGHLFAI. Residues 206-208 lie on the Extracellular side of the membrane; the sequence is NYT. Positions 209–222 form an intramembrane region, discontinuously helical; that stretch reads GASMNPARSFGPAV. The NPA 2 motif lies at 213–215; it reads NPA. At 223-231 the chain is on the extracellular side; that stretch reads IMGNWENHW. A helical membrane pass occupies residues 232-252; that stretch reads IYWVGPIIGAVLAGALYEYVF. Residues 253-323 lie on the Cytoplasmic side of the membrane; that stretch reads CPDVELKRRL…DSSGEVLSSV (71 aa). 2 positions are modified to phosphoserine: Ser-276 and Ser-285. Position 289 is a phosphothreonine (Thr-289). A Phosphoserine modification is found at Ser-321.

This sequence belongs to the MIP/aquaporin (TC 1.A.8) family. As to quaternary structure, homotetramer. The tetramers can form oligomeric arrays in membranes. The size of the oligomers differs between tissues and is smaller in skeletal muscle than in brain. Interaction between AQP4 oligomeric arrays in close-by cells can contribute to cell-cell adhesion. Part of a complex containing MLC1, TRPV4, HEPACAM and ATP1B1. Post-translationally, phosphorylation by PKC at Ser-180 promotes internalization from the cell membrane, reducing the conductance by 50%. Phosphorylation by PKG at Ser-111 in response to glutamate increases conductance by 40%. In terms of processing, isoform Long: Palmitoylated on its N-terminal region. Isoform 3: Not palmitoylated. Detected in cerebellum. Detected on pericapillary astrocyte endfeet in cerebellum, and in skeletal muscle. Detected in glial lamellae in the hypothalamus (at protein level). Abundant in mature brain cortex, cerebellum and spinal cord. Highly expressed in the ependymal cell lining the aqueductal system and over the space of the brain in contact with the subarachnoid space. Detected in paraventricular and supraoptic nuclei, the granule cell layer of the dentate gyrus and the Purkinje cell layer in the cerebellum. Only weakly detectable in eye, kidney, intestine, and lung.

It is found in the cell membrane. The protein resides in the basolateral cell membrane. The protein localises to the endosome membrane. It localises to the sarcolemma. Its subcellular location is the cell projection. It carries out the reaction H2O(in) = H2O(out). Its function is as follows. Forms a water-specific channel. Plays an important role in brain water homeostasis and in glymphatic solute transport. Required for a normal rate of water exchange across the blood brain interface. Required for normal levels of cerebrospinal fluid influx into the brain cortex and parenchyma along paravascular spaces that surround penetrating arteries, and for normal drainage of interstitial fluid along paravenous drainage pathways. Thereby, it is required for normal clearance of solutes from the brain interstitial fluid, including soluble beta-amyloid peptides derived from APP. Plays a redundant role in urinary water homeostasis and urinary concentrating ability. The sequence is that of Aquaporin-4 (Aqp4) from Rattus norvegicus (Rat).